The chain runs to 263 residues: Indolethylamine N-methyltransferase (263 aa).

An N6-succinyllysine modification is found at Lys-13. Residues Tyr-20, Tyr-25, 63–64 (GS), Tyr-69, Asp-85, and Asn-90 each bind S-adenosyl-L-methionine. At Lys-96 the chain carries N6-succinyllysine. Residues 142–143 (DV) and Leu-163 each bind S-adenosyl-L-methionine.

Belongs to the class I-like SAM-binding methyltransferase superfamily. NNMT/PNMT/TEMT family. In terms of assembly, monomer.

The protein resides in the cytoplasm. It carries out the reaction a tertiary amine + S-adenosyl-L-methionine = a methylated tertiary amine + S-adenosyl-L-homocysteine + H(+). The catalysed reaction is a secondary amine + S-adenosyl-L-methionine = a methylated secondary amine + S-adenosyl-L-homocysteine + H(+). It catalyses the reaction a primary amine + S-adenosyl-L-methionine = a methylated primary amine + S-adenosyl-L-homocysteine + H(+). The enzyme catalyses dimethyl sulfide + S-adenosyl-L-methionine = trimethylsulfonium + S-adenosyl-L-homocysteine. Functionally, catalyzes the N-methylation of tryptamine and structurally related compounds. Functions as a thioether S-methyltransferase and is active with a variety of thioethers and the corresponding selenium and tellurium compounds, including 3-methylthiopropionaldehyde, dimethyl selenide, dimethyl telluride, 2-methylthioethylamine, 2-methylthioethanol, methyl-n-propyl sulfide and diethyl sulfide. Plays an important role in the detoxification of selenium compounds. The polypeptide is Indolethylamine N-methyltransferase (INMT) (Pongo abelii (Sumatran orangutan)).